A 407-amino-acid polypeptide reads, in one-letter code: Peptidase T (407 aa).

Position 82 (His-82) interacts with Zn(2+). Asp-84 is an active-site residue. A Zn(2+)-binding site is contributed by Asp-143. The active-site Proton acceptor is Glu-177. Zn(2+) contacts are provided by Glu-178, Asp-200, and His-382.

This sequence belongs to the peptidase M20B family. The cofactor is Zn(2+).

It is found in the cytoplasm. It carries out the reaction Release of the N-terminal residue from a tripeptide.. Cleaves the N-terminal amino acid of tripeptides. The sequence is that of Peptidase T from Streptococcus thermophilus (strain CNRZ 1066).